Here is a 542-residue protein sequence, read N- to C-terminus: uncharacterized protein (542 aa).

A run of 12 helical transmembrane segments spans residues 12 to 32, 57 to 77, 94 to 114, 123 to 143, 168 to 188, 191 to 211, 216 to 236, 243 to 263, 277 to 297, 313 to 333, 358 to 378, and 391 to 411; these read LVFG…GTVL, FGDV…AILY, VIVM…SWTA, AAAV…AGLA, LFAV…AALV, FVVS…LVTL, IDAP…AFLL, SGVV…PTVI, IATF…IPGA, VLAL…VQAT, VTSW…AVPM, and LIIF…GTSL.

Belongs to the monovalent cation:proton antiporter 1 (CPA1) transporter (TC 2.A.36) family.

The protein resides in the cell membrane. This is an uncharacterized protein from Mycobacterium bovis (strain ATCC BAA-935 / AF2122/97).